The primary structure comprises 173 residues: Photosystem I assembly protein Ycf3 (173 aa).

3 TPR repeats span residues 35-68 (AFVYYRDGMSAQADGEYAEALDNYYEALKLEEDP), 72-105 (SYILYNIGIIHASNGDQEKALEYYNQSVDLNPRM), and 120-153 (GEKAREEGREEEAEALYDKAAEYWKQAIRLAPNN).

The protein belongs to the Ycf3 family.

It is found in the cellular thylakoid membrane. In terms of biological role, essential for the assembly of the photosystem I (PSI) complex. May act as a chaperone-like factor to guide the assembly of the PSI subunits. This Rippkaea orientalis (strain PCC 8801 / RF-1) (Cyanothece sp. (strain PCC 8801)) protein is Photosystem I assembly protein Ycf3.